Reading from the N-terminus, the 404-residue chain is Chorismate synthase (404 aa).

NADP(+) contacts are provided by R40 and R46. Residues 135–137 (RAS), 256–257 (QA), G300, 315–319 (KPIST), and R341 each bind FMN.

It belongs to the chorismate synthase family. Homotetramer. FMNH2 is required as a cofactor.

It catalyses the reaction 5-O-(1-carboxyvinyl)-3-phosphoshikimate = chorismate + phosphate. The protein operates within metabolic intermediate biosynthesis; chorismate biosynthesis; chorismate from D-erythrose 4-phosphate and phosphoenolpyruvate: step 7/7. Functionally, catalyzes the anti-1,4-elimination of the C-3 phosphate and the C-6 proR hydrogen from 5-enolpyruvylshikimate-3-phosphate (EPSP) to yield chorismate, which is the branch point compound that serves as the starting substrate for the three terminal pathways of aromatic amino acid biosynthesis. This reaction introduces a second double bond into the aromatic ring system. In Mycobacterium sp. (strain JLS), this protein is Chorismate synthase.